The chain runs to 193 residues: Acyl carrier protein phosphodiesterase (193 aa).

Belongs to the AcpH family.

The catalysed reaction is holo-[ACP] + H2O = apo-[ACP] + (R)-4'-phosphopantetheine + H(+). Converts holo-ACP to apo-ACP by hydrolytic cleavage of the phosphopantetheine prosthetic group from ACP. This Escherichia coli O7:K1 (strain IAI39 / ExPEC) protein is Acyl carrier protein phosphodiesterase.